A 294-amino-acid polypeptide reads, in one-letter code: 4-hydroxy-tetrahydrodipicolinate synthase (294 aa).

Thr45 is a binding site for pyruvate. Catalysis depends on Tyr133, which acts as the Proton donor/acceptor. Lys161 serves as the catalytic Schiff-base intermediate with substrate. Ile203 is a binding site for pyruvate.

This sequence belongs to the DapA family. As to quaternary structure, homotetramer; dimer of dimers.

It is found in the cytoplasm. The catalysed reaction is L-aspartate 4-semialdehyde + pyruvate = (2S,4S)-4-hydroxy-2,3,4,5-tetrahydrodipicolinate + H2O + H(+). Its pathway is amino-acid biosynthesis; L-lysine biosynthesis via DAP pathway; (S)-tetrahydrodipicolinate from L-aspartate: step 3/4. Its function is as follows. Catalyzes the condensation of (S)-aspartate-beta-semialdehyde [(S)-ASA] and pyruvate to 4-hydroxy-tetrahydrodipicolinate (HTPA). The sequence is that of 4-hydroxy-tetrahydrodipicolinate synthase from Buchnera aphidicola subsp. Schizaphis graminum (strain Sg).